Here is a 243-residue protein sequence, read N- to C-terminus: Sugar fermentation stimulation protein homolog (243 aa).

Belongs to the SfsA family.

The sequence is that of Sugar fermentation stimulation protein homolog from Acaryochloris marina (strain MBIC 11017).